Consider the following 527-residue polypeptide: GMP synthase [glutamine-hydrolyzing] (527 aa).

Residues 20 to 208 (SVVILDYGSQ…LFDVCGCAPT (189 aa)) enclose the Glutamine amidotransferase type-1 domain. Cys97 acts as the Nucleophile in catalysis. Active-site residues include His182 and Glu184. Residues 209–402 (WTAESFVEQA…LGLPEEIVQR (194 aa)) form the GMPS ATP-PPase domain. 236 to 242 (SGGVDSS) is a binding site for ATP.

As to quaternary structure, homodimer.

The catalysed reaction is XMP + L-glutamine + ATP + H2O = GMP + L-glutamate + AMP + diphosphate + 2 H(+). It participates in purine metabolism; GMP biosynthesis; GMP from XMP (L-Gln route): step 1/1. Catalyzes the synthesis of GMP from XMP. This chain is GMP synthase [glutamine-hydrolyzing], found in Thermomicrobium roseum (strain ATCC 27502 / DSM 5159 / P-2).